The primary structure comprises 218 residues: Elongation factor Ts (218 aa).

Residues 82-85 (TDFV) are involved in Mg(2+) ion dislocation from EF-Tu.

It belongs to the EF-Ts family.

The protein localises to the cytoplasm. Its function is as follows. Associates with the EF-Tu.GDP complex and induces the exchange of GDP to GTP. It remains bound to the aminoacyl-tRNA.EF-Tu.GTP complex up to the GTP hydrolysis stage on the ribosome. The sequence is that of Elongation factor Ts from Prochlorococcus marinus (strain MIT 9312).